The chain runs to 159 residues: Urease accessory protein UreE (159 aa).

A disordered region spans residues 140–159 (GAYHGTGHHHHGHGHDPHHG).

This sequence belongs to the UreE family.

The protein localises to the cytoplasm. Its function is as follows. Involved in urease metallocenter assembly. Binds nickel. Probably functions as a nickel donor during metallocenter assembly. In Sinorhizobium fredii (strain NBRC 101917 / NGR234), this protein is Urease accessory protein UreE.